We begin with the raw amino-acid sequence, 282 residues long: Glutamate--LysW ligase ArgX (282 aa).

Residues K87, K127, 131–137 (GSWGRLV), and 167–178 (QEYINYKSRDIR) each bind ATP. The ATP-grasp domain occupies 91–277 (YSKLYREGIP…VAEELVSYVK (187 aa)). R192 provides a ligand contact to substrate. N202 contributes to the ATP binding site. Position 203–204 (203–204 (IA)) interacts with substrate. D237, E250, and N252 together coordinate Mg(2+). 256–260 (EFKGF) is a binding site for substrate. The GF motif that is essential for ArgX substrate specificity motif lies at 259 to 260 (GF).

It belongs to the RimK family. LysX subfamily. In terms of assembly, homotetramer. Interacts with LysW. The cofactor is Mg(2+).

The enzyme catalyses [amino-group carrier protein]-C-terminal-L-glutamate + L-glutamate + ATP = [amino-group carrier protein]-C-terminal-gamma-(L-glutamyl)-L-glutamate + ADP + phosphate + H(+). It functions in the pathway amino-acid biosynthesis; L-arginine biosynthesis. Catalyzes the ATP-dependent formation of a covalent bond between the amino group of glutamate and the gamma-carboxyl group of the C-terminal glutamate residue in LysW. The protein is Glutamate--LysW ligase ArgX of Sulfolobus acidocaldarius (strain ATCC 33909 / DSM 639 / JCM 8929 / NBRC 15157 / NCIMB 11770).